The chain runs to 553 residues: Cytochrome P450 monooxygenase alnD (553 aa).

A helical transmembrane segment spans residues 351-371 (LVGAGFVTSSAFLSWLIYSLV). Cys493 provides a ligand contact to heme. A glycan (N-linked (GlcNAc...) asparagine) is linked at Asn518.

Belongs to the cytochrome P450 family. It depends on heme as a cofactor.

Its subcellular location is the membrane. It functions in the pathway polyketide biosynthesis. Cytochrome P450 monooxygenase; part of the gene cluster that mediates the biosynthesis of asperlin, a polyketide showing anti-inflammatory, antitumor and antibiotic activities. The first step of the asperlin biosynthesis is the production of the intermediate 2,4,6-octatrienoic acid by the highly redusing polyketide synthase alnA with cleavage of the PKS product by the esterase alnB. 2,4,6-octatrienoic acid is further converted to asperlin via several steps involving the remaining enzymes from the cluster. The polypeptide is Cytochrome P450 monooxygenase alnD (Emericella nidulans (strain FGSC A4 / ATCC 38163 / CBS 112.46 / NRRL 194 / M139) (Aspergillus nidulans)).